We begin with the raw amino-acid sequence, 663 residues long: UvrABC system protein B (663 aa).

The region spanning 27–414 (KNIENGVKDQ…SDNHIAEQLI (388 aa)) is the Helicase ATP-binding domain. 40–47 (GVTGSGKT) lines the ATP pocket. The Beta-hairpin motif lies at 93 to 116 (YYDYYQPEAYIKTTDTYIEKDSSV). The 163-residue stretch at 432–594 (QVDDLLDEIR…IDPKSIIKEI (163 aa)) folds into the Helicase C-terminal domain. The UVR domain maps to 624-659 (EKEITKLEKKIKKLVEELDFEQAIILRDEMLKLKEL).

Belongs to the UvrB family. In terms of assembly, forms a heterotetramer with UvrA during the search for lesions. Interacts with UvrC in an incision complex.

It is found in the cytoplasm. In terms of biological role, the UvrABC repair system catalyzes the recognition and processing of DNA lesions. A damage recognition complex composed of 2 UvrA and 2 UvrB subunits scans DNA for abnormalities. Upon binding of the UvrA(2)B(2) complex to a putative damaged site, the DNA wraps around one UvrB monomer. DNA wrap is dependent on ATP binding by UvrB and probably causes local melting of the DNA helix, facilitating insertion of UvrB beta-hairpin between the DNA strands. Then UvrB probes one DNA strand for the presence of a lesion. If a lesion is found the UvrA subunits dissociate and the UvrB-DNA preincision complex is formed. This complex is subsequently bound by UvrC and the second UvrB is released. If no lesion is found, the DNA wraps around the other UvrB subunit that will check the other stand for damage. In Fusobacterium nucleatum subsp. nucleatum (strain ATCC 25586 / DSM 15643 / BCRC 10681 / CIP 101130 / JCM 8532 / KCTC 2640 / LMG 13131 / VPI 4355), this protein is UvrABC system protein B.